The sequence spans 30 residues: Thylakoid lumenal 13.3 kDa protein (30 aa).

The protein localises to the plastid. It is found in the chloroplast thylakoid lumen. The sequence is that of Thylakoid lumenal 13.3 kDa protein from Spinacia oleracea (Spinach).